Reading from the N-terminus, the 920-residue chain is Bifunctional aspartokinase/homoserine dehydrogenase 1, chloroplastic (920 aa).

Residues methionine 1–proline 21 form a disordered region. The N-terminal 92 residues, methionine 1–aspartate 92, are a transit peptide targeting the chloroplast. Residues methionine 93–leucine 341 are aspartokinase. The tract at residues serine 342–isoleucine 566 is interface. 2 ACT domains span residues valine 416–asparagine 491 and threonine 497–arginine 574. Positions isoleucine 567–serine 920 are homoserine dehydrogenase. The NAD(+) site is built by isoleucine 572 and alanine 601. Isoleucine 572 contacts NADP(+). An NADPH-binding site is contributed by isoleucine 572. The NADP(+) site is built by arginine 604, threonine 653, and lysine 677. Position 653 (threonine 653) interacts with NAD(+). Residues threonine 653 and lysine 677 each contribute to the NADPH site. Glutamate 704, valine 707, alanine 709, and leucine 711 together coordinate Na(+). Glycine 762 and glutamate 765 together coordinate NADP(+). L-homoserine contacts are provided by glutamate 765 and aspartate 776. The active-site Proton donor is the lysine 780. Glycine 897 lines the NAD(+) pocket. Glycine 897 is a binding site for NADP(+). Glycine 897 is a binding site for NADPH.

This sequence in the N-terminal section; belongs to the aspartokinase family. In the C-terminal section; belongs to the homoserine dehydrogenase family. In terms of assembly, homo- or heterodimer. A metal cation serves as cofactor.

It is found in the plastid. The protein resides in the chloroplast. The catalysed reaction is L-homoserine + NADP(+) = L-aspartate 4-semialdehyde + NADPH + H(+). It carries out the reaction L-homoserine + NAD(+) = L-aspartate 4-semialdehyde + NADH + H(+). The enzyme catalyses L-aspartate + ATP = 4-phospho-L-aspartate + ADP. Its pathway is amino-acid biosynthesis; L-lysine biosynthesis via DAP pathway; (S)-tetrahydrodipicolinate from L-aspartate: step 1/4. It functions in the pathway amino-acid biosynthesis; L-methionine biosynthesis via de novo pathway; L-homoserine from L-aspartate: step 1/3. It participates in amino-acid biosynthesis; L-methionine biosynthesis via de novo pathway; L-homoserine from L-aspartate: step 3/3. The protein operates within amino-acid biosynthesis; L-threonine biosynthesis; L-threonine from L-aspartate: step 1/5. Its pathway is amino-acid biosynthesis; L-threonine biosynthesis; L-threonine from L-aspartate: step 3/5. Bifunctional aspartate kinase and homoserine dehydrogenase that catalyzes the first and the third steps toward the synthesis of lysine, methionine and threonine from aspartate. This chain is Bifunctional aspartokinase/homoserine dehydrogenase 1, chloroplastic (AKHSDH1), found in Zea mays (Maize).